A 315-amino-acid polypeptide reads, in one-letter code: MKLKFFVLALCVPAIFTTHATTNYPLFIPDNISTDISLGSLSGKTKERVYHPKEGGRKISQLDWKYSNATIVRGGIDWKLIPKVSFGVSGWTTLGNQKASMVDKDWNNSNTPQVWTDQSWHPNTHLRDANEFELNLKGWLLNNLDYRLGLIAGYQESRYSFNAMGGSYIYSENGGSRNKKGAHPSGERTIGYKQLFKIPYIGLTANYRHENFEFGAELKYSGWVLSSDTDKHYQTETIFKDEIKNQNYCSVAANIGYYVTPSAKFYIEGSRNYISNKKGDTSLYEQSTNISGTIKNSASIEYIGFLTSAGIKYIF.

An N-terminal signal peptide occupies residues 1–20; it reads MKLKFFVLALCVPAIFTTHA. Active-site residues include Asp-103, Asp-105, Asp-230, and His-232.

The protein belongs to the peptidase A26 family.

It is found in the cell outer membrane. Protease responsible for the cleavage of IcsA between 'Arg-758' and 'Arg-759', removing the entire alpha domain from IscA localized on the bacterial surface. This proteolytic activity contributes to the maintenance of a tight polar cap of IcsA, which is important to Shigella actin-based motility. The chain is Outer membrane protease IcsP (icsP) from Shigella flexneri.